Consider the following 281-residue polypeptide: 3-methyl-2-oxobutanoate hydroxymethyltransferase (281 aa).

The segment at 1–20 (MSEQTIYGANTPGGSGPRTK) is disordered. 2 residues coordinate Mg(2+): D62 and D101. 3-methyl-2-oxobutanoate is bound by residues 62–63 (DS), D101, and K131. E133 is a Mg(2+) binding site. Catalysis depends on E199, which acts as the Proton acceptor.

This sequence belongs to the PanB family. In terms of assembly, homodecamer; pentamer of dimers. Mg(2+) is required as a cofactor.

It localises to the cytoplasm. It catalyses the reaction 3-methyl-2-oxobutanoate + (6R)-5,10-methylene-5,6,7,8-tetrahydrofolate + H2O = 2-dehydropantoate + (6S)-5,6,7,8-tetrahydrofolate. The protein operates within cofactor biosynthesis; (R)-pantothenate biosynthesis; (R)-pantoate from 3-methyl-2-oxobutanoate: step 1/2. Catalyzes the reversible reaction in which hydroxymethyl group from 5,10-methylenetetrahydrofolate is transferred onto alpha-ketoisovalerate to form ketopantoate. In Mycobacterium bovis (strain ATCC BAA-935 / AF2122/97), this protein is 3-methyl-2-oxobutanoate hydroxymethyltransferase.